The chain runs to 665 residues: Syntabulin (665 aa).

The segment covering 1 to 22 (MGPLRESKKEQRVQHQEKEISR) has biased composition (basic and acidic residues). Positions 1-271 (MGPLRESKKE…GVKPPNPEQY (271 aa)) are disordered. The segment at 2 to 421 (GPLRESKKEQ…DKLPDGLSLE (420 aa)) is sufficient for interaction with KIF5B. The segment covering 35-52 (PQQQQQQQNKVSPASESP) has biased composition (low complexity). Ser54 carries the phosphoserine modification. Over residues 61–77 (FNPSSSGRSARTISSNS) the composition is skewed to low complexity. A compositionally biased stretch (polar residues) spans 85 to 101 (CPSSQSVSPVKTPSDTG). Ser111 carries the phosphoserine modification. Over residues 141–162 (GGIIKPGSEADFSSSSSTGSIS) the composition is skewed to low complexity. The span at 168–180 (MSTTGNKRASFSR) shows a compositional bias: polar residues. Residues 225 to 245 (SYAPSSPSSSNSGSYKGSDCS) are compositionally biased toward low complexity. Residues 275–357 (LQQKEVTVRH…MRSSLADKDK (83 aa)) are a coiled coil. The segment at 314 to 421 (REDWIEEECH…DKLPDGLSLE (108 aa)) is sufficient for interaction with STX1A. Phosphoserine occurs at positions 400 and 557. The chain crosses the membrane as a helical span at residues 609 to 629 (FLVDLLAVAAPVVPTVLWAFS).

In terms of assembly, interacts with STX1A and KIF5B.

The protein resides in the golgi apparatus membrane. In terms of biological role, part of a kinesin motor-adapter complex that is critical for the anterograde axonal transport of active zone components and contributes to activity-dependent presynaptic assembly during neuronal development. The chain is Syntabulin (Sybu) from Mus musculus (Mouse).